The chain runs to 132 residues: Large ribosomal subunit protein bL12 (132 aa).

Basic and acidic residues predominate over residues 100–126; that stretch reads ESTPKPVKEGASKEDAEAAKKELEEAG. A disordered region spans residues 100 to 132; that stretch reads ESTPKPVKEGASKEDAEAAKKELEEAGAKVSIK.

It belongs to the bacterial ribosomal protein bL12 family. Homodimer. Part of the ribosomal stalk of the 50S ribosomal subunit. Forms a multimeric L10(L12)X complex, where L10 forms an elongated spine to which 2 to 4 L12 dimers bind in a sequential fashion. Binds GTP-bound translation factors.

Functionally, forms part of the ribosomal stalk which helps the ribosome interact with GTP-bound translation factors. Is thus essential for accurate translation. The polypeptide is Large ribosomal subunit protein bL12 (Thermosynechococcus vestitus (strain NIES-2133 / IAM M-273 / BP-1)).